The following is a 445-amino-acid chain: MLRKGCCVELLLLLLAGELPLSGGCPRDCVCYPSPMTVSCQAHNFAAIPEGIPEDSERIFLQNNHITFLQQGHFSPAMVTLWIYSNNITFIAPNTFEGFVHLEELDLGDNRQLRTLAPETFQGLVKLHALYLYKCGLSSLPAGIFGGLHSLQYLYLQDNHIEYLQDDIFVDLVNLSHLFLHGNKLWSLGQGIFRGLVNLDRLLLHENQLQWVHHKAFHDLHRLTTLFLFNNSLTELQGDCLAPLVALEFLRLNGNAWDCGCRARSLWEWLRRFRGSSSVVPCATPELRQGQDLKSLRVEDFRNCTGPASPHQIKSHTLSTSDRAARKEHHPSHGASRDKGHPHGHLPGSRSGSKKPGKNCTSHRNRNQISKGSAGKELPELQDYAPDYQHKFSFDIMPTARPKRKGKCARRTPIRAPSGVQQASSGTALGVSLLAWILGLVVSLR.

Positions 1-24 (MLRKGCCVELLLLLLAGELPLSGG) are cleaved as a signal peptide. Positions 25 to 54 (CPRDCVCYPSPMTVSCQAHNFAAIPEGIPE) constitute an LRRNT domain. LRR repeat units lie at residues 55-76 (DSERIFLQNNHITFLQQGHFSP), 77-98 (AMVTLWIYSNNITFIAPNTFEG), 101-123 (HLEELDLGDNRQLRTLAPETFQG), 126-147 (KLHALYLYKCGLSSLPAGIFGG), 150-171 (SLQYLYLQDNHIEYLQDDIFVD), 174-195 (NLSHLFLHGNKLWSLGQGIFRG), 198-219 (NLDRLLLHENQLQWVHHKAFHD), and 222-243 (RLTTLFLFNNSLTELQGDCLAP). Residues 255 to 306 (NAWDCGCRARSLWEWLRRFRGSSSVVPCATPELRQGQDLKSLRVEDFRNCTG) enclose the LRRCT domain. 2 disordered regions span residues 304-380 (CTGP…ELPE) and 401-421 (RPKRKGKCARRTPIRAPSGVQ). 2 stretches are compositionally biased toward basic residues: residues 352–366 (GSKKPGKNCTSHRNR) and 401–413 (RPKRKGKCARRTP). S424 carries the GPI-anchor amidated serine lipid modification. The chain crosses the membrane as a helical span at residues 424–444 (SSGTALGVSLLAWILGLVVSL). Residues 425–445 (SGTALGVSLLAWILGLVVSLR) constitute a propeptide, removed in mature form.

This sequence belongs to the Nogo receptor family. Identified in a complex that contains RTN4R, RTN4RL1 and NGFR; the interaction depends on the presence of chondroitin sulfate proteoglycans. Does not interact with MAG, OMG and RTN4. As to expression, detected in brain (at protein level). Expressed in various regions of the brain, including the cerebral cortex, hippocampus, striatum, thalamus and cerebellum.

It localises to the cell membrane. The protein resides in the membrane raft. The protein localises to the perikaryon. Its subcellular location is the cell projection. Functionally, cell surface receptor. Plays a functionally redundant role in postnatal brain development and in regulating axon regeneration in the adult central nervous system. Contributes to normal axon migration across the brain midline and normal formation of the corpus callosum. Protects motoneurons against apoptosis; protection against apoptosis is probably mediated by MAG. Plays a role in inhibiting neurite outgrowth and axon regeneration via its binding to neuronal chondroitin sulfate proteoglycans. Binds heparin. Like other family members, plays a role in restricting the number dendritic spines and the number of synapses that are formed during brain development. Signaling mediates activation of Rho and downstream reorganization of the actin cytoskeleton. This chain is Reticulon-4 receptor-like 1, found in Rattus norvegicus (Rat).